The chain runs to 101 residues: Urease subunit beta (101 aa).

This sequence belongs to the urease beta subunit family. As to quaternary structure, heterotrimer of UreA (gamma), UreB (beta) and UreC (alpha) subunits. Three heterotrimers associate to form the active enzyme.

It localises to the cytoplasm. The enzyme catalyses urea + 2 H2O + H(+) = hydrogencarbonate + 2 NH4(+). Its pathway is nitrogen metabolism; urea degradation; CO(2) and NH(3) from urea (urease route): step 1/1. The sequence is that of Urease subunit beta from Actinobacillus pleuropneumoniae serotype 7 (strain AP76).